Here is a 362-residue protein sequence, read N- to C-terminus: MIDPFKRLARKGLFLFDPETAHGMSIAALKSGLVPACQITPDPRLCQTVAGLTFENPLGMAAGYDKNAEVPEALLKLGFGFTEIGTVTPKPQAGNPRPRIFRLVEDEAVINRLGFNNEGHEAAFGRLAALSGRGIVGVNIGANKDSEDRIADYVAGIRRFHSVARYFTANISSPNTPGLRDLQARESLAALLSSVLAARDEVAAASGRKVPVFLKIAPDLTEEGMDDIAAEALAHALDGLIVSNTTLSRDGLKDQRQAKETGGLSGVPLFEKSTAVLARMRKRVGAALPIIGVGGVSSAETALEKIRAGADLVQLYSCMVYEGPGLPGDIVRGLSKLMDREKAAGIGELRDSRLDYWAARKV.

FMN contacts are provided by residues A62–K66 and T86. K66 lines the substrate pocket. N111–F115 contributes to the substrate binding site. 2 residues coordinate FMN: N139 and N170. N170 is a binding site for substrate. S173 functions as the Nucleophile in the catalytic mechanism. N175 contributes to the substrate binding site. Residues K215 and S243 each coordinate FMN. N244–T245 is a substrate binding site. Residues G266, G295, and Y316–S317 each bind FMN.

It belongs to the dihydroorotate dehydrogenase family. Type 2 subfamily. As to quaternary structure, monomer. FMN serves as cofactor.

Its subcellular location is the cell membrane. The enzyme catalyses (S)-dihydroorotate + a quinone = orotate + a quinol. The protein operates within pyrimidine metabolism; UMP biosynthesis via de novo pathway; orotate from (S)-dihydroorotate (quinone route): step 1/1. Catalyzes the conversion of dihydroorotate to orotate with quinone as electron acceptor. The protein is Dihydroorotate dehydrogenase (quinone) of Rhizobium leguminosarum bv. trifolii (strain WSM2304).